The chain runs to 101 residues: Small ribosomal subunit protein uS17 (101 aa).

This sequence belongs to the universal ribosomal protein uS17 family. As to quaternary structure, part of the 30S ribosomal subunit.

Its function is as follows. One of the primary rRNA binding proteins, it binds specifically to the 5'-end of 16S ribosomal RNA. The chain is Small ribosomal subunit protein uS17 from Leifsonia xyli subsp. xyli (strain CTCB07).